Here is a 285-residue protein sequence, read N- to C-terminus: Glutamate racemase (285 aa).

Residues 28–29 (DS) and 60–61 (YG) each bind substrate. C92 acts as the Proton donor/acceptor in catalysis. 93–94 (NT) is a substrate binding site. C204 (proton donor/acceptor) is an active-site residue. 205–206 (TH) serves as a coordination point for substrate.

It belongs to the aspartate/glutamate racemases family.

It carries out the reaction L-glutamate = D-glutamate. It participates in cell wall biogenesis; peptidoglycan biosynthesis. Its function is as follows. Provides the (R)-glutamate required for cell wall biosynthesis. This is Glutamate racemase from Escherichia coli O6:H1 (strain CFT073 / ATCC 700928 / UPEC).